Here is a 224-residue protein sequence, read N- to C-terminus: Phosphoribosylformylglycinamidine synthase subunit PurQ (224 aa).

Positions 2–224 constitute a Glutamine amidotransferase type-1 domain; the sequence is KFAVIVFPGS…IVDNFVKGGV (223 aa). Catalysis depends on C86, which acts as the Nucleophile. Catalysis depends on residues H194 and E196.

Part of the FGAM synthase complex composed of 1 PurL, 1 PurQ and 2 PurS subunits.

It is found in the cytoplasm. It carries out the reaction N(2)-formyl-N(1)-(5-phospho-beta-D-ribosyl)glycinamide + L-glutamine + ATP + H2O = 2-formamido-N(1)-(5-O-phospho-beta-D-ribosyl)acetamidine + L-glutamate + ADP + phosphate + H(+). The enzyme catalyses L-glutamine + H2O = L-glutamate + NH4(+). It participates in purine metabolism; IMP biosynthesis via de novo pathway; 5-amino-1-(5-phospho-D-ribosyl)imidazole from N(2)-formyl-N(1)-(5-phospho-D-ribosyl)glycinamide: step 1/2. In terms of biological role, part of the phosphoribosylformylglycinamidine synthase complex involved in the purines biosynthetic pathway. Catalyzes the ATP-dependent conversion of formylglycinamide ribonucleotide (FGAR) and glutamine to yield formylglycinamidine ribonucleotide (FGAM) and glutamate. The FGAM synthase complex is composed of three subunits. PurQ produces an ammonia molecule by converting glutamine to glutamate. PurL transfers the ammonia molecule to FGAR to form FGAM in an ATP-dependent manner. PurS interacts with PurQ and PurL and is thought to assist in the transfer of the ammonia molecule from PurQ to PurL. The protein is Phosphoribosylformylglycinamidine synthase subunit PurQ of Caldanaerobacter subterraneus subsp. tengcongensis (strain DSM 15242 / JCM 11007 / NBRC 100824 / MB4) (Thermoanaerobacter tengcongensis).